Consider the following 205-residue polypeptide: Lymphotoxin-alpha (205 aa).

The signal sequence occupies residues 1-34 (MTPPERLFLPRVCGTTLHLLLLGLLLVLLPGAQG). The O-linked (GalNAc...) threonine; partial glycan is linked to Thr41. One can recognise a THD domain in the interval 63–205 (PAAHLIGDPS…STVFFGAFAL (143 aa)). The N-linked (GlcNAc...) asparagine glycan is linked to Asn96.

This sequence belongs to the tumor necrosis factor family. In terms of assembly, homotrimer, and heterotrimer of either two LTB and one LTA subunits or (less prevalent) two LTA and one LTB subunits. Interacts with TNFRSF14.

The protein resides in the secreted. It is found in the membrane. Its function is as follows. Cytokine that in its homotrimeric form binds to TNFRSF1A/TNFR1, TNFRSF1B/TNFBR and TNFRSF14/HVEM. In its heterotrimeric form with LTB binds to TNFRSF3/LTBR. Lymphotoxin is produced by lymphocytes and is cytotoxic for a wide range of tumor cells in vitro and in vivo. This is Lymphotoxin-alpha (LTA) from Homo sapiens (Human).